The sequence spans 426 residues: Serine--tRNA ligase (426 aa).

Residue 229 to 231 (TAE) participates in L-serine binding. Residues 260–262 (RKE) and Val-276 contribute to the ATP site. Glu-283 lines the L-serine pocket. Residue 349 to 352 (EVTS) coordinates ATP. Thr-384 lines the L-serine pocket.

This sequence belongs to the class-II aminoacyl-tRNA synthetase family. Type-1 seryl-tRNA synthetase subfamily. As to quaternary structure, homodimer. The tRNA molecule binds across the dimer.

It localises to the cytoplasm. It carries out the reaction tRNA(Ser) + L-serine + ATP = L-seryl-tRNA(Ser) + AMP + diphosphate + H(+). It catalyses the reaction tRNA(Sec) + L-serine + ATP = L-seryl-tRNA(Sec) + AMP + diphosphate + H(+). It functions in the pathway aminoacyl-tRNA biosynthesis; selenocysteinyl-tRNA(Sec) biosynthesis; L-seryl-tRNA(Sec) from L-serine and tRNA(Sec): step 1/1. Functionally, catalyzes the attachment of serine to tRNA(Ser). Is also able to aminoacylate tRNA(Sec) with serine, to form the misacylated tRNA L-seryl-tRNA(Sec), which will be further converted into selenocysteinyl-tRNA(Sec). This chain is Serine--tRNA ligase, found in Treponema pallidum (strain Nichols).